A 358-amino-acid polypeptide reads, in one-letter code: Phosphoribosylformylglycinamidine cyclo-ligase (358 aa).

It belongs to the AIR synthase family.

Its subcellular location is the cytoplasm. It carries out the reaction 2-formamido-N(1)-(5-O-phospho-beta-D-ribosyl)acetamidine + ATP = 5-amino-1-(5-phospho-beta-D-ribosyl)imidazole + ADP + phosphate + H(+). The protein operates within purine metabolism; IMP biosynthesis via de novo pathway; 5-amino-1-(5-phospho-D-ribosyl)imidazole from N(2)-formyl-N(1)-(5-phospho-D-ribosyl)glycinamide: step 2/2. In Chromohalobacter salexigens (strain ATCC BAA-138 / DSM 3043 / CIP 106854 / NCIMB 13768 / 1H11), this protein is Phosphoribosylformylglycinamidine cyclo-ligase.